The sequence spans 289 residues: Serine/threonine-protein phosphatase Pgam5, mitochondrial (289 aa).

The helical transmembrane segment at 7 to 23 (FVCGTGAGLAVYYLQRL) threads the bilayer.

Belongs to the phosphoglycerate mutase family. BPG-dependent PGAM subfamily. As to quaternary structure, interacts with Pk92B/ASK1.

It is found in the mitochondrion outer membrane. The catalysed reaction is O-phospho-L-seryl-[protein] + H2O = L-seryl-[protein] + phosphate. It catalyses the reaction O-phospho-L-threonyl-[protein] + H2O = L-threonyl-[protein] + phosphate. Displays phosphatase activity for serine/threonine residues, and dephosphorylates and activates Pk92B kinase. Has apparently no phosphoglycerate mutase activity. The protein is Serine/threonine-protein phosphatase Pgam5, mitochondrial of Drosophila erecta (Fruit fly).